The sequence spans 261 residues: Cytochrome c oxidase subunit 3 (261 aa).

Topologically, residues 1 to 15 are mitochondrial matrix; it reads MTHQTHAYHMVNPSP. The helical transmembrane segment at 16–34 threads the bilayer; it reads WPLTGALSALLMTSGLAMW. Residues 35 to 40 lie on the Mitochondrial intermembrane side of the membrane; it reads FHFNST. The chain crosses the membrane as a helical span at residues 41-66; sequence LLLALGLLTNILTMYQWWRDIIREST. Over 67 to 72 the chain is Mitochondrial matrix; the sequence is FQGHHT. Residues 73–105 traverse the membrane as a helical segment; it reads SIVQKGLRYGMILFIISEVFFFSGFFWAFYHSS. Topologically, residues 106 to 128 are mitochondrial intermembrane; the sequence is LAPTPELGGCWPPTGIHPLNPLE. A helical transmembrane segment spans residues 129–152; it reads VPLLNTSVLLASGVSITWAHHSLM. Topologically, residues 153-155 are mitochondrial matrix; sequence EGN. A helical transmembrane segment spans residues 156–183; it reads RKNMLQGLFITISLGVYFTLLQASEYYE. Residues 184-190 lie on the Mitochondrial intermembrane side of the membrane; the sequence is ASFTISD. The chain crosses the membrane as a helical span at residues 191–223; the sequence is GVYGSTFFVATGFHGLHVIIGSTFLIVCFLRQL. Residues 224 to 232 lie on the Mitochondrial matrix side of the membrane; it reads KFHFTSSHH. Residues 233–256 traverse the membrane as a helical segment; that stretch reads FGFEAAAWYWHFVDVVWLFLYVSI. Topologically, residues 257-261 are mitochondrial intermembrane; the sequence is YWWGS.

This sequence belongs to the cytochrome c oxidase subunit 3 family. Component of the cytochrome c oxidase (complex IV, CIV), a multisubunit enzyme composed of 14 subunits. The complex is composed of a catalytic core of 3 subunits MT-CO1, MT-CO2 and MT-CO3, encoded in the mitochondrial DNA, and 11 supernumerary subunits COX4I, COX5A, COX5B, COX6A, COX6B, COX6C, COX7A, COX7B, COX7C, COX8 and NDUFA4, which are encoded in the nuclear genome. The complex exists as a monomer or a dimer and forms supercomplexes (SCs) in the inner mitochondrial membrane with NADH-ubiquinone oxidoreductase (complex I, CI) and ubiquinol-cytochrome c oxidoreductase (cytochrome b-c1 complex, complex III, CIII), resulting in different assemblies (supercomplex SCI(1)III(2)IV(1) and megacomplex MCI(2)III(2)IV(2)).

It is found in the mitochondrion inner membrane. The enzyme catalyses 4 Fe(II)-[cytochrome c] + O2 + 8 H(+)(in) = 4 Fe(III)-[cytochrome c] + 2 H2O + 4 H(+)(out). Its function is as follows. Component of the cytochrome c oxidase, the last enzyme in the mitochondrial electron transport chain which drives oxidative phosphorylation. The respiratory chain contains 3 multisubunit complexes succinate dehydrogenase (complex II, CII), ubiquinol-cytochrome c oxidoreductase (cytochrome b-c1 complex, complex III, CIII) and cytochrome c oxidase (complex IV, CIV), that cooperate to transfer electrons derived from NADH and succinate to molecular oxygen, creating an electrochemical gradient over the inner membrane that drives transmembrane transport and the ATP synthase. Cytochrome c oxidase is the component of the respiratory chain that catalyzes the reduction of oxygen to water. Electrons originating from reduced cytochrome c in the intermembrane space (IMS) are transferred via the dinuclear copper A center (CU(A)) of subunit 2 and heme A of subunit 1 to the active site in subunit 1, a binuclear center (BNC) formed by heme A3 and copper B (CU(B)). The BNC reduces molecular oxygen to 2 water molecules using 4 electrons from cytochrome c in the IMS and 4 protons from the mitochondrial matrix. The chain is Cytochrome c oxidase subunit 3 (MT-CO3) from Equus asinus (Donkey).